An 825-amino-acid polypeptide reads, in one-letter code: Probable inorganic carbon transporter subunit DabA (825 aa).

Residues Cys-346, Asp-348, His-516, and Cys-531 each contribute to the Zn(2+) site.

The protein belongs to the inorganic carbon transporter (TC 9.A.2) DabA family. As to quaternary structure, forms a complex with DabB. Zn(2+) serves as cofactor.

Its subcellular location is the cell inner membrane. Its function is as follows. Part of an energy-coupled inorganic carbon pump. The polypeptide is Probable inorganic carbon transporter subunit DabA (Paracidovorax citrulli (strain AAC00-1) (Acidovorax citrulli)).